Reading from the N-terminus, the 192-residue chain is Probable GTP-binding protein EngB (192 aa).

The EngB-type G domain occupies 22–192; sequence SLPEIVFVGR…LLEQLENYTG (171 aa). GTP is bound by residues 30–37, 57–61, 75–78, 142–145, and 172–174; these read GRSNVGKS, GKTQL, DLPG, TKYD, and YSA. Mg(2+) contacts are provided by Ser37 and Thr59.

This sequence belongs to the TRAFAC class TrmE-Era-EngA-EngB-Septin-like GTPase superfamily. EngB GTPase family. Mg(2+) serves as cofactor.

Necessary for normal cell division and for the maintenance of normal septation. The protein is Probable GTP-binding protein EngB of Prosthecochloris aestuarii (strain DSM 271 / SK 413).